A 149-amino-acid polypeptide reads, in one-letter code: Transcription factor bHLH153 (149 aa).

Positions R27 to L76 constitute a bHLH domain.

This sequence belongs to the bHLH protein family.

The protein localises to the nucleus. The polypeptide is Transcription factor bHLH153 (Arabidopsis thaliana (Mouse-ear cress)).